A 456-amino-acid chain; its full sequence is ATP-dependent protease ATPase subunit HslU (456 aa).

Residues Val-18, 60-65 (GVGKTE), Asp-269, Glu-334, and Arg-406 each bind ATP.

This sequence belongs to the ClpX chaperone family. HslU subfamily. A double ring-shaped homohexamer of HslV is capped on each side by a ring-shaped HslU homohexamer. The assembly of the HslU/HslV complex is dependent on binding of ATP.

The protein localises to the cytoplasm. In terms of biological role, ATPase subunit of a proteasome-like degradation complex; this subunit has chaperone activity. The binding of ATP and its subsequent hydrolysis by HslU are essential for unfolding of protein substrates subsequently hydrolyzed by HslV. HslU recognizes the N-terminal part of its protein substrates and unfolds these before they are guided to HslV for hydrolysis. This is ATP-dependent protease ATPase subunit HslU from Desulfosudis oleivorans (strain DSM 6200 / JCM 39069 / Hxd3) (Desulfococcus oleovorans).